Here is a 426-residue protein sequence, read N- to C-terminus: Dihydroorotase (426 aa).

Positions 58 and 60 each coordinate Zn(2+). Residues 60–62 and Asn92 each bind substrate; that span reads HLR. Asp150, His177, and His230 together coordinate Zn(2+). Position 276 (Asn276) interacts with substrate. Asp303 contributes to the Zn(2+) binding site. Asp303 is an active-site residue. Position 307 (His307) interacts with substrate.

The protein belongs to the metallo-dependent hydrolases superfamily. DHOase family. Class I DHOase subfamily. Zn(2+) is required as a cofactor.

The enzyme catalyses (S)-dihydroorotate + H2O = N-carbamoyl-L-aspartate + H(+). Its pathway is pyrimidine metabolism; UMP biosynthesis via de novo pathway; (S)-dihydroorotate from bicarbonate: step 3/3. Catalyzes the reversible cyclization of carbamoyl aspartate to dihydroorotate. The polypeptide is Dihydroorotase (Acetivibrio thermocellus (strain ATCC 27405 / DSM 1237 / JCM 9322 / NBRC 103400 / NCIMB 10682 / NRRL B-4536 / VPI 7372) (Clostridium thermocellum)).